The following is a 267-amino-acid chain: Large ribosomal subunit protein uL4 (267 aa).

Belongs to the universal ribosomal protein uL4 family. As to quaternary structure, part of the 50S ribosomal subunit.

Functionally, one of the primary rRNA binding proteins, this protein initially binds near the 5'-end of the 23S rRNA. It is important during the early stages of 50S assembly. It makes multiple contacts with different domains of the 23S rRNA in the assembled 50S subunit and ribosome. Forms part of the polypeptide exit tunnel. This is Large ribosomal subunit protein uL4 from Saccharolobus islandicus (strain L.S.2.15 / Lassen #1) (Sulfolobus islandicus).